A 124-amino-acid polypeptide reads, in one-letter code: Large ribosomal subunit protein bL12 (124 aa).

Belongs to the bacterial ribosomal protein bL12 family. In terms of assembly, homodimer. Part of the ribosomal stalk of the 50S ribosomal subunit. Forms a multimeric L10(L12)X complex, where L10 forms an elongated spine to which 2 to 4 L12 dimers bind in a sequential fashion. Binds GTP-bound translation factors.

Forms part of the ribosomal stalk which helps the ribosome interact with GTP-bound translation factors. Is thus essential for accurate translation. This Ralstonia pickettii (strain 12J) protein is Large ribosomal subunit protein bL12.